The chain runs to 219 residues: Large ribosomal subunit protein uL3 (219 aa).

The disordered stretch occupies residues 124–154; sequence FSGSIKRHNQSEGPKSHGSRYHRRPGSMGPI.

Belongs to the universal ribosomal protein uL3 family. As to quaternary structure, part of the 50S ribosomal subunit. Forms a cluster with proteins L14 and L19.

Its function is as follows. One of the primary rRNA binding proteins, it binds directly near the 3'-end of the 23S rRNA, where it nucleates assembly of the 50S subunit. The sequence is that of Large ribosomal subunit protein uL3 from Phytoplasma mali (strain AT).